A 317-amino-acid polypeptide reads, in one-letter code: Glutaminase (317 aa).

Substrate contacts are provided by Ser-67, Asn-118, Glu-162, Asn-169, Tyr-193, Tyr-245, and Val-263.

The protein belongs to the glutaminase family. In terms of assembly, homotetramer.

The catalysed reaction is L-glutamine + H2O = L-glutamate + NH4(+). The sequence is that of Glutaminase from Brucella canis (strain ATCC 23365 / NCTC 10854 / RM-666).